A 1096-amino-acid chain; its full sequence is Cation-transporting ATPase 5 (1096 aa).

The Cytoplasmic segment spans residues 1–19; that stretch reads MDSIELKQLVPENDSEPGT. A helical membrane pass occupies residues 20–41; it reads PRQLLFQHYDISNEETIGIKPF. Topologically, residues 42–47 are lumenal; sequence KSIPAK. A helical membrane pass occupies residues 48–70; it reads VYILRVTEILTLGLLHLILTWLP. The Cytoplasmic segment spans residues 71-193; sequence EFRLKWIEAP…LVSTKKSIVT (123 aa). A helical membrane pass occupies residues 194 to 216; that stretch reads ILLNEVLHPFYLFQAVSVLIWLC. The Lumenal segment spans residues 217–220; sequence DSFV. A helical transmembrane segment spans residues 221–238; that stretch reads FYSCCIVFISSYSIFLSV. The Cytoplasmic portion of the chain corresponds to 239–391; that stretch reads KESKESENRI…NLRPSQLYLD (153 aa). Residues 392 to 412 traverse the membrane as a helical segment; the sequence is SMSFLKTMAILSFVSIVFIAI. The Lumenal portion of the chain corresponds to 413-425; that stretch reads YLNLYNASFGHVV. The chain crosses the membrane as a helical span at residues 426-447; it reads LRSLDVLTILVPPALPATLSVG. Residues 448–895 are Cytoplasmic-facing; sequence IANSIARLSR…SLILSHRCFQ (448 aa). The active-site 4-aspartylphosphate intermediate is Asp480. Residues Asp838 and Asp842 each coordinate Mg(2+). Residues 896-915 form a helical membrane-spanning segment; it reads YMVLCAIVQFSGVFFLYLKN. The Lumenal portion of the chain corresponds to 916 to 922; sequence YNFNDNQ. The chain crosses the membrane as a helical span at residues 923–940; it reads FLFMDLLIIFPLSAAMSY. Topologically, residues 941–958 are cytoplasmic; sequence FDPAQNLTSNRPNSTLFG. The chain crosses the membrane as a helical span at residues 959–982; that stretch reads KGRVKDLGIQSVLIWLSHGLLTLI. The Lumenal portion of the chain corresponds to 983-1003; that stretch reads LHELNWVELPEWQLEKSNTKN. A helical membrane pass occupies residues 1004–1026; sequence VLVTSIFLLSSLQYLGICIGINQ. Topologically, residues 1027–1040 are cytoplasmic; that stretch reads SSEFLSPIWKKKTY. The helical transmembrane segment at 1041–1060 threads the bilayer; sequence VCLCTTIGLCNIYLCFANEN. Residues 1061–1075 are Lumenal-facing; the sequence is HIISRCLQITRLPTL. Residues 1076 to 1096 traverse the membrane as a helical segment; it reads YRFIILFMGVISCCLTSILNM.

This sequence belongs to the cation transport ATPase (P-type) (TC 3.A.3) family. Type V subfamily.

The protein localises to the endoplasmic reticulum membrane. It is found in the golgi apparatus membrane. The enzyme catalyses ATP + H2O = ADP + phosphate + H(+). Its function is as follows. Plays a role in regulating calcium and manganese homeostasis responsible for cell cycle progression. This Schizosaccharomyces pombe (strain 972 / ATCC 24843) (Fission yeast) protein is Cation-transporting ATPase 5 (cta5).